The following is a 583-amino-acid chain: Chloroplast sensor kinase, chloroplastic (583 aa).

The N-terminal 50 residues, 1 to 50 (MSSIYLHGLSRRRRIGSVIVAIYMLDSCGAFLSASGSGRYPGFSYRGLSV), are a transit peptide targeting the chloroplast. Residues 97-277 (LFQELALSQL…SMDTERAALQ (181 aa)) form a GAF region. Cys115 contributes to the [3Fe-4S] cluster binding site. Residue His292 is modified to Phosphohistidine; by autocatalysis. Residues 412-442 (AASGSNGPSNSTTSFSGNGSDVSTYTEDDGA) form a disordered region. The span at 414–431 (SGSNGPSNSTTSFSGNGS) shows a compositional bias: low complexity. Residues 447–583 (SSLFSEMDLE…ALDWTLRKHW (137 aa)) form the Histidine kinase domain.

The protein belongs to the chloroplast sensor kinase protein family. In terms of assembly, oligomerizes. The cofactor is [3Fe-4S] cluster. Autophosphorylates, possibly on His-292.

It localises to the plastid. Its subcellular location is the chloroplast stroma. The catalysed reaction is ATP + protein L-histidine = ADP + protein N-phospho-L-histidine.. Its function is as follows. Sensor kinase that senses the plastoquinone (PQ) redox state involved in stoichiometry adjustment of both photosystems (e.g. long-term adaptation via transcriptional regulation of reaction center genes of photosystems I and II) and state transitions (e.g. short-term adaptation involving reversible post-translational phosphorylation of light-harvesting complex II, LHC II), thus linking photosynthesis with gene expression in chloroplasts. Reduced PQ suppresses its autophosphorylation activity. The sequence is that of Chloroplast sensor kinase, chloroplastic from Phaeodactylum tricornutum (strain CCAP 1055/1).